We begin with the raw amino-acid sequence, 122 residues long: Basic phospholipase A2 (122 aa).

7 disulfides stabilise this stretch: Cys26–Cys115, Cys28–Cys44, Cys43–Cys95, Cys49–Cys122, Cys50–Cys88, Cys57–Cys81, and Cys75–Cys86. Residues Tyr27, Gly29, and Gly31 each contribute to the Ca(2+) site. Residue His47 is part of the active site. Asp48 lines the Ca(2+) pocket. The active site involves Asp89.

Belongs to the phospholipase A2 family. Group II subfamily. D49 sub-subfamily. Homodimer. The cofactor is Ca(2+). As to expression, expressed by the venom gland.

The protein resides in the secreted. It carries out the reaction a 1,2-diacyl-sn-glycero-3-phosphocholine + H2O = a 1-acyl-sn-glycero-3-phosphocholine + a fatty acid + H(+). In terms of biological role, snake venom phospholipase A2 (PLA2) that inhibits neuromuscular transmission by blocking acetylcholine release from the nerve termini. PLA2 catalyzes the calcium-dependent hydrolysis of the 2-acyl groups in 3-sn-phosphoglycerides. This is Basic phospholipase A2 from Gloydius blomhoffii (Mamushi).